We begin with the raw amino-acid sequence, 662 residues long: Interleukin-12 receptor subunit beta-1 (662 aa).

An N-terminal signal peptide occupies residues 1–23; sequence MEPLVTWVVPLLFLFLLSRQGAA. Residues 24–545 lie on the Extracellular side of the membrane; sequence CRTSECCFQD…RFSIEVQVSD (522 aa). 5 Fibronectin type-III domains span residues 46–136, 142–234, 237–337, 338–444, and 448–542; these read GPRD…LYNS, PLGD…VPPE, PQPQ…IPAD, THTE…GNAS, and TPHH…IEVQ. Cysteine 52 and cysteine 62 are oxidised to a cystine. The N-linked (GlcNAc...) asparagine glycan is linked to asparagine 121. Residues 222 to 226 carry the WSXWS motif motif; it reads WSKWS. Asparagine 329, asparagine 346, asparagine 352, asparagine 442, and asparagine 456 each carry an N-linked (GlcNAc...) asparagine glycan. The chain crosses the membrane as a helical span at residues 546 to 570; sequence WLIFFASLGSFLSILLVGVLGYLGL. Topologically, residues 571–662 are cytoplasmic; it reads NRAARHLCPP…EDGDRCKAKM (92 aa). The Box 1 motif signature appears at 577-585; that stretch reads LCPPLPTPC. The span at 626–637 shows a compositional bias: basic and acidic residues; that stretch reads GERTEPLEKTEL. The tract at residues 626–648 is disordered; the sequence is GERTEPLEKTELPEGAPELALDT.

This sequence belongs to the type I cytokine receptor family. Type 2 subfamily. Dimer or oligomer; disulfide-linked. Interacts with IL12RB2 to form the high affinity IL12 receptor. Heterodimer with IL23R; in presence of IL23. The heterodimer forms the IL23 receptor.

The protein resides in the membrane. Functions as an interleukin receptor which binds interleukin-12 with low affinity and is involved in IL12 transduction. Associated with IL12RB2 it forms a functional, high affinity receptor for IL12. Also associates with IL23R to form the interleukin-23 receptor which functions in IL23 signal transduction probably through activation of the Jak-Stat signaling cascade. In Homo sapiens (Human), this protein is Interleukin-12 receptor subunit beta-1 (IL12RB1).